A 698-amino-acid chain; its full sequence is Elongation factor G (698 aa).

Positions 8–284 (ANVRNIGIMA…AVVDYLPSPL (277 aa)) constitute a tr-type G domain. Residues 17-24 (AHIDAGKT), 81-85 (DTPGH), and 135-138 (NKLD) contribute to the GTP site.

This sequence belongs to the TRAFAC class translation factor GTPase superfamily. Classic translation factor GTPase family. EF-G/EF-2 subfamily.

It is found in the cytoplasm. Catalyzes the GTP-dependent ribosomal translocation step during translation elongation. During this step, the ribosome changes from the pre-translocational (PRE) to the post-translocational (POST) state as the newly formed A-site-bound peptidyl-tRNA and P-site-bound deacylated tRNA move to the P and E sites, respectively. Catalyzes the coordinated movement of the two tRNA molecules, the mRNA and conformational changes in the ribosome. The chain is Elongation factor G from Salinispora tropica (strain ATCC BAA-916 / DSM 44818 / JCM 13857 / NBRC 105044 / CNB-440).